Here is a 380-residue protein sequence, read N- to C-terminus: 3-methylitaconate isomerase (380 aa).

This sequence belongs to the PrpF family. Homotetramer.

The enzyme catalyses 2-methylene-3-methylsuccinate = dimethylmaleate. The protein operates within cofactor degradation; nicotinate degradation; propanoate and pyruvate from 6-hydroxynicotinate: step 6/8. With respect to regulation, inhibited by oxidized glutathione, p-chloromercuriphenylsulfonic acid and iodoacetic acid. Not inhibited by the chelating agent alpha,alpha-dipyridyl. Activity is slightly increased by EDTA. Not activated by Fe(2+), Mg(2+), Mn(2+) or Ca(2+). Unaffected by K(+), Na(+), NH4(+), Rb(+) or Li(+). Catalyzes the reversible isomerization of (R)-3-methylitaconate to 2,3-dimethylmaleate. Has very low isomerase activity with itaconate. In Eubacterium barkeri (Clostridium barkeri), this protein is 3-methylitaconate isomerase (mii).